The sequence spans 566 residues: Serine/threonine-protein kinase PknE (566 aa).

At 1 to 337 the chain is on the cytoplasmic side; the sequence is MDGTAESREG…PLPRSARQPW (337 aa). Residue Ser-7 is modified to Phosphoserine; by autocatalysis. Thr-11 bears the Phosphothreonine; by autocatalysis mark. Positions 16-275 constitute a Protein kinase domain; the sequence is YRLRRLVGRG…DLSAAAHAAL (260 aa). ATP-binding positions include 22–30 and Lys-45; that span reads VGRGGMGDV. Thr-50 and Thr-59 each carry phosphothreonine; by autocatalysis. The active-site Proton acceptor is Asp-139. A phosphothreonine; by autocatalysis mark is found at Thr-170, Thr-175, and Thr-178. Residues 296 to 330 are disordered; the sequence is PVPSTHPVSPGTRWPQPTPWAGGAPPWGPPSSPLP. Residues 338 to 358 traverse the membrane as a helical segment; that stretch reads LWVGVAVAVVVALAGGLGIAL. The Extracellular segment spans residues 359–566; the sequence is AHPWRSSGPR…DPSWLARLIG (208 aa).

Belongs to the protein kinase superfamily. Ser/Thr protein kinase family. As to quaternary structure, homodimer. Post-translationally, autophosphorylated on serine and threonine residues. Dephosphorylated by PstP.

Its subcellular location is the cell membrane. It catalyses the reaction L-seryl-[protein] + ATP = O-phospho-L-seryl-[protein] + ADP + H(+). The enzyme catalyses L-threonyl-[protein] + ATP = O-phospho-L-threonyl-[protein] + ADP + H(+). A serine/threonine-protein kinase, acts on HupB in vitro, modifying at least 2 Ser and 8 Thr residues. Important for bacterial survival in the host during infection. This is Serine/threonine-protein kinase PknE from Mycobacterium tuberculosis (strain ATCC 25177 / H37Ra).